The following is a 121-amino-acid chain: Small ribosomal subunit protein uS13 (121 aa).

The tract at residues 99 to 121 (GQRTRTNARTRRGARKTVAGKKK) is disordered. The span at 100 to 121 (QRTRTNARTRRGARKTVAGKKK) shows a compositional bias: basic residues.

The protein belongs to the universal ribosomal protein uS13 family. In terms of assembly, part of the 30S ribosomal subunit. Forms a loose heterodimer with protein S19. Forms two bridges to the 50S subunit in the 70S ribosome.

In terms of biological role, located at the top of the head of the 30S subunit, it contacts several helices of the 16S rRNA. In the 70S ribosome it contacts the 23S rRNA (bridge B1a) and protein L5 of the 50S subunit (bridge B1b), connecting the 2 subunits; these bridges are implicated in subunit movement. Contacts the tRNAs in the A and P-sites. This is Small ribosomal subunit protein uS13 from Synechococcus sp. (strain RCC307).